The sequence spans 248 residues: 2,3-bisphosphoglycerate-dependent phosphoglycerate mutase (248 aa).

Residues 8–15, 21–22, Arg-60, 87–90, Lys-98, 114–115, and 183–184 each bind substrate; these read RHGESAWN, TG, EKHY, RR, and GN. Catalysis depends on His-9, which acts as the Tele-phosphohistidine intermediate. Glu-87 (proton donor/acceptor) is an active-site residue.

Belongs to the phosphoglycerate mutase family. BPG-dependent PGAM subfamily.

It catalyses the reaction (2R)-2-phosphoglycerate = (2R)-3-phosphoglycerate. It functions in the pathway carbohydrate degradation; glycolysis; pyruvate from D-glyceraldehyde 3-phosphate: step 3/5. Functionally, catalyzes the interconversion of 2-phosphoglycerate and 3-phosphoglycerate. The chain is 2,3-bisphosphoglycerate-dependent phosphoglycerate mutase from Bacteroides fragilis (strain ATCC 25285 / DSM 2151 / CCUG 4856 / JCM 11019 / LMG 10263 / NCTC 9343 / Onslow / VPI 2553 / EN-2).